The following is a 440-amino-acid chain: Protein ABHD8 (440 aa).

A disordered region spans residues 123–158; that stretch reads DPAGSDGRSAPGSGSGSGSGSGSGGRRRRARRPKRT. Residues 124 to 134 show a composition bias toward low complexity; that stretch reads PAGSDGRSAPG. The segment covering 135 to 146 has biased composition (gly residues); that stretch reads SGSGSGSGSGSG. Positions 147–158 are enriched in basic residues; the sequence is GRRRRARRPKRT. Residues 178–280 enclose the AB hydrolase-1 domain; that stretch reads VLFFIHGVGG…HKVIMINGGG (103 aa). Active-site charge relay system residues include serine 253, aspartate 371, and histidine 399.

Belongs to the AB hydrolase superfamily. As to quaternary structure, interacts with NLRP3 (via NACHT and LLR domains); this interaction is enhanced in the presence of NLRP3 inflammasome inducers, such as ATP, nigericin, silica, or alum. Interacts with ZDHHC12.

Its subcellular location is the cytoplasm. In terms of biological role, negatively regulates NLRP3-driven inflammation. Promotes NLRP3 degradation through the chaperone-mediated autophagy (CMA) pathway, hence attenuating inflammasome activation and IL1B secretion. Acts by recruiting palmitoyltransferase ZDHHC12 to NLRP3, facilitating NLRP3 palmitoylation and subsequent degradation. This is Protein ABHD8 from Macaca fascicularis (Crab-eating macaque).